A 391-amino-acid polypeptide reads, in one-letter code: F-box only protein 5 (391 aa).

The F-box domain occupies 198–245 (AELFHRDFKHLLTKILRHLSAMDLINVISVSTTWRKILQKDNSAYNSY). The ZBR-type zinc-finger motif lies at 318–366 (CLKVCVDCSSPAKYDPYLHRATCTRESCKFDFCTLCSCKYHGSKCCQTS). Zn(2+) is bound by residues Cys-322, Cys-325, Cys-340, Cys-345, Cys-350, Cys-353, His-358, and Cys-363. The disordered stretch occupies residues 365–391 (TSKPRSYRVPSEPLPGSKKSKQNLRRL). Basic residues predominate over residues 382-391 (KKSKQNLRRL).

As to quaternary structure, part of a SCF (SKP1-cullin-F-box) protein ligase complex. Interacts with btrc. Interacts with skp1. Interacts with cdc20. Interacts with pin1; stabilizes fbxo5 by preventing its association with btrc in an isomerization-dependent pathway; this interaction is present during G2 phase and prevents fbxo5 degradation. Interacts with plk1. Proteolysed; proteolysis is induced by both cyclin B-cdk1 and cyclin A-cdk1/2 complex through probable phosphorylation. Proteolysis is inhibited by pin1 during G2.

Its subcellular location is the nucleus. It localises to the cytoplasm. The protein localises to the cytoskeleton. It is found in the spindle. The protein resides in the microtubule organizing center. Its subcellular location is the centrosome. It participates in protein modification; protein ubiquitination. Functionally, regulates progression through early mitosis by inhibiting the anaphase promoting complex/cyclosome (APC). Binds to the APC activators cdc20 to prevent APC activation. Can also bind directly to the APC to inhibit substrate-binding. Required to arrest unfertilized eggs at metaphase of meiosis II, by preventing their release from metaphase of meiosis II, through inhibition of APC-dependent cyclin B destruction leading to stabilization of cyclin B-cdk1 complex activity. The polypeptide is F-box only protein 5 (Xenopus tropicalis (Western clawed frog)).